We begin with the raw amino-acid sequence, 254 residues long: Thiazole synthase (254 aa).

Catalysis depends on Lys95, which acts as the Schiff-base intermediate with DXP. 1-deoxy-D-xylulose 5-phosphate contacts are provided by residues Gly156, 182-183 (AG), and 204-205 (NT).

This sequence belongs to the ThiG family. As to quaternary structure, homotetramer. Forms heterodimers with either ThiH or ThiS.

Its subcellular location is the cytoplasm. It catalyses the reaction [ThiS sulfur-carrier protein]-C-terminal-Gly-aminoethanethioate + 2-iminoacetate + 1-deoxy-D-xylulose 5-phosphate = [ThiS sulfur-carrier protein]-C-terminal Gly-Gly + 2-[(2R,5Z)-2-carboxy-4-methylthiazol-5(2H)-ylidene]ethyl phosphate + 2 H2O + H(+). The protein operates within cofactor biosynthesis; thiamine diphosphate biosynthesis. Functionally, catalyzes the rearrangement of 1-deoxy-D-xylulose 5-phosphate (DXP) to produce the thiazole phosphate moiety of thiamine. Sulfur is provided by the thiocarboxylate moiety of the carrier protein ThiS. In vitro, sulfur can be provided by H(2)S. The protein is Thiazole synthase of Shewanella putrefaciens (strain CN-32 / ATCC BAA-453).